Here is a 309-residue protein sequence, read N- to C-terminus: Malate dehydrogenase (309 aa).

NAD(+) is bound by residues 9–14 (GAGFVG) and aspartate 33. 2 residues coordinate substrate: arginine 82 and arginine 88. Residues asparagine 95 and 118-120 (VNN) each bind NAD(+). 2 residues coordinate substrate: asparagine 120 and arginine 151. Residue histidine 175 is the Proton acceptor of the active site.

This sequence belongs to the LDH/MDH superfamily. MDH type 3 family.

It carries out the reaction (S)-malate + NAD(+) = oxaloacetate + NADH + H(+). Catalyzes the reversible oxidation of malate to oxaloacetate. The protein is Malate dehydrogenase of Roseiflexus sp. (strain RS-1).